The following is a 476-amino-acid chain: uncharacterized protein (476 aa).

The LisH domain occupies 7-39; it reads SRFYTNLLIANYLKHNGLEDTLAAFIRETALPL.

This is an uncharacterized protein from Saccharomyces cerevisiae (strain ATCC 204508 / S288c) (Baker's yeast).